Reading from the N-terminus, the 240-residue chain is Fimbriae Y protein (240 aa).

The protein resides in the fimbrium. This Salmonella typhimurium (strain LT2 / SGSC1412 / ATCC 700720) protein is Fimbriae Y protein (fimY).